The following is a 209-amino-acid chain: DNA ADP-ribosyl transferase (209 aa).

Positions 9–209 (TPIYHITHID…RVCIRKDWYY (201 aa)) constitute a DarT domain. NAD(+) is bound by residues 13–15 (HIT), Gly22, and Leu30. The segment at 35 to 53 (SPPKQRSIAYAHIQERRNR) is NAD(+)-binding element. The DNA-binding element occupies 44–50 (YAHIQER). Arg51 contributes to the NAD(+) binding site. Arg51 acts as the Proton acceptor in catalysis. 3 consecutive DNA-binding regions follow at residues 75–80 (RSPMLY), 145–148 (SYWA), and 154–158 (REKKQ). The interval 116-160 (TDRHGVLSHARFFRQLEELAQLDWEAIQASYWADPPELREKKQAE) is ADP-ribosylating turn-turn loop. The active site involves Glu160.

The protein belongs to the DarT ADP-ribosyltransferase family. In terms of assembly, interacts with cognate antitoxin DarG (via C-terminus); this heterodimeric complex neutralizes the toxic effect of DarT by preventing ssDNA binding to DarT and consequently inactivating the toxin by direct protein-protein interactions.

It carries out the reaction a thymidine in DNA + NAD(+) = an N-(ADP-alpha-D-ribosyl)-thymidine in DNA + nicotinamide + H(+). In terms of biological role, toxic component of the hybrid type II/IV toxin-antitoxin (TA) system DarTG, which plays a crucial role in controlling bacterial growth and bacteriophage infection. In case of phage infection, DarT toxin ADP-ribosylates DNA, which inhibits both viral DNA and RNA synthesis and leads to abortive infection. ADP-ribosylates ssDNA on the second thymidine of the consensus sequence 5'-TNTC-3'; the protein does not auto-modify. Arg-51 is highly flexible, allowing it to assume multiple positions in the crystal structures. Its toxic effect is neutralized by cognate antitoxin DarG. In Thermus sp. (strain 2.9), this protein is DNA ADP-ribosyl transferase.